Reading from the N-terminus, the 273-residue chain is Orotidine 5'-phosphate decarboxylase (273 aa).

K95 functions as the Proton donor in the catalytic mechanism.

Belongs to the OMP decarboxylase family. Type 2 subfamily.

The enzyme catalyses orotidine 5'-phosphate + H(+) = UMP + CO2. Its pathway is pyrimidine metabolism; UMP biosynthesis via de novo pathway; UMP from orotate: step 2/2. The chain is Orotidine 5'-phosphate decarboxylase from Bordetella bronchiseptica (strain ATCC BAA-588 / NCTC 13252 / RB50) (Alcaligenes bronchisepticus).